The chain runs to 72 residues: Gas vesicle protein A (72 aa).

This sequence belongs to the gas vesicle GvpA family. The gas vesicle shell is 2 nm thick and consists of a single layer of this protein. It forms helical ribs nearly perpendicular to the long axis of the vesicle.

The protein localises to the gas vesicle shell. Functionally, gas vesicles are hollow, gas filled proteinaceous nanostructures found in some microorganisms. During planktonic growth they allow positioning of the organism at a favorable depth for light or nutrient acquisition. GvpA forms the protein shell. In Planktothrix agardhii (Oscillatoria agardhii), this protein is Gas vesicle protein A.